Consider the following 234-residue polypeptide: Endonuclease V (234 aa).

Residues D36 and D104 each contribute to the Mg(2+) site.

This sequence belongs to the endonuclease V family. The cofactor is Mg(2+).

It is found in the cytoplasm. The enzyme catalyses Endonucleolytic cleavage at apurinic or apyrimidinic sites to products with a 5'-phosphate.. DNA repair enzyme involved in the repair of deaminated bases. Selectively cleaves double-stranded DNA at the second phosphodiester bond 3' to a deoxyinosine leaving behind the intact lesion on the nicked DNA. The sequence is that of Endonuclease V from Yersinia enterocolitica serotype O:8 / biotype 1B (strain NCTC 13174 / 8081).